The primary structure comprises 466 residues: 3-isopropylmalate dehydratase large subunit (466 aa).

Positions 347, 407, and 410 each coordinate [4Fe-4S] cluster.

Belongs to the aconitase/IPM isomerase family. LeuC type 1 subfamily. As to quaternary structure, heterodimer of LeuC and LeuD. Requires [4Fe-4S] cluster as cofactor.

It carries out the reaction (2R,3S)-3-isopropylmalate = (2S)-2-isopropylmalate. It participates in amino-acid biosynthesis; L-leucine biosynthesis; L-leucine from 3-methyl-2-oxobutanoate: step 2/4. Functionally, catalyzes the isomerization between 2-isopropylmalate and 3-isopropylmalate, via the formation of 2-isopropylmaleate. This is 3-isopropylmalate dehydratase large subunit from Citrobacter koseri (strain ATCC BAA-895 / CDC 4225-83 / SGSC4696).